Reading from the N-terminus, the 804-residue chain is Leucine--tRNA ligase (804 aa).

The 'HIGH' region signature appears at 40-51 (PYPSGAGLHVGH). The short motif at 576–580 (KMSKS) is the 'KMSKS' region element. K579 contributes to the ATP binding site.

It belongs to the class-I aminoacyl-tRNA synthetase family.

The protein resides in the cytoplasm. The catalysed reaction is tRNA(Leu) + L-leucine + ATP = L-leucyl-tRNA(Leu) + AMP + diphosphate. This chain is Leucine--tRNA ligase, found in Staphylococcus aureus (strain MRSA252).